A 708-amino-acid chain; its full sequence is Vertnin (708 aa).

2 disordered regions span residues 473 to 499 (PWKG…FLPP) and 561 to 636 (APAL…PVAE). Residues 568–582 (GLREAKEKQEKEAGR) are compositionally biased toward basic and acidic residues.

The protein belongs to the vertnin family.

The chain is Vertnin (VRTN) from Ailuropoda melanoleuca (Giant panda).